The primary structure comprises 65 residues: Small ribosomal subunit protein bS21 (65 aa).

Positions 45–65 are disordered; the sequence is GRLKRSRSRRRAQRANEERNS. Positions 48–57 are enriched in basic residues; that stretch reads KRSRSRRRAQ.

This sequence belongs to the bacterial ribosomal protein bS21 family.

This Pelodictyon phaeoclathratiforme (strain DSM 5477 / BU-1) protein is Small ribosomal subunit protein bS21.